The following is a 570-amino-acid chain: Glutamate--tRNA ligase (570 aa).

Residues Pro105 to Asn115 carry the 'HIGH' region motif.

Belongs to the class-I aminoacyl-tRNA synthetase family. Glutamate--tRNA ligase type 2 subfamily.

It is found in the cytoplasm. The enzyme catalyses tRNA(Glu) + L-glutamate + ATP = L-glutamyl-tRNA(Glu) + AMP + diphosphate. Its function is as follows. Catalyzes the attachment of glutamate to tRNA(Glu) in a two-step reaction: glutamate is first activated by ATP to form Glu-AMP and then transferred to the acceptor end of tRNA(Glu). This Pyrococcus horikoshii (strain ATCC 700860 / DSM 12428 / JCM 9974 / NBRC 100139 / OT-3) protein is Glutamate--tRNA ligase.